Here is a 133-residue protein sequence, read N- to C-terminus: Phosphoribosyl-AMP cyclohydrolase (133 aa).

Residue aspartate 90 participates in Mg(2+) binding. Residue cysteine 91 participates in Zn(2+) binding. Mg(2+)-binding residues include aspartate 92 and aspartate 94. Residues cysteine 107 and cysteine 114 each contribute to the Zn(2+) site.

Belongs to the PRA-CH family. Homodimer. It depends on Mg(2+) as a cofactor. The cofactor is Zn(2+).

It localises to the cytoplasm. It carries out the reaction 1-(5-phospho-beta-D-ribosyl)-5'-AMP + H2O = 1-(5-phospho-beta-D-ribosyl)-5-[(5-phospho-beta-D-ribosylamino)methylideneamino]imidazole-4-carboxamide. Its pathway is amino-acid biosynthesis; L-histidine biosynthesis; L-histidine from 5-phospho-alpha-D-ribose 1-diphosphate: step 3/9. In terms of biological role, catalyzes the hydrolysis of the adenine ring of phosphoribosyl-AMP. This Streptomyces avermitilis (strain ATCC 31267 / DSM 46492 / JCM 5070 / NBRC 14893 / NCIMB 12804 / NRRL 8165 / MA-4680) protein is Phosphoribosyl-AMP cyclohydrolase.